A 228-amino-acid chain; its full sequence is Large ribosomal subunit protein bL25 (228 aa).

Residues 196–228 (EEAAVAEAQSAESAEGKAEAEAEATNEKNKSEA) are disordered. A compositionally biased stretch (basic and acidic residues) spans 209–228 (AEGKAEAEAEATNEKNKSEA).

Belongs to the bacterial ribosomal protein bL25 family. CTC subfamily. In terms of assembly, part of the 50S ribosomal subunit; part of the 5S rRNA/L5/L18/L25 subcomplex. Contacts the 5S rRNA. Binds to the 5S rRNA independently of L5 and L18.

This is one of the proteins that binds to the 5S RNA in the ribosome where it forms part of the central protuberance. The protein is Large ribosomal subunit protein bL25 of Methylorubrum extorquens (strain PA1) (Methylobacterium extorquens).